We begin with the raw amino-acid sequence, 396 residues long: Ribosomal RNA large subunit methyltransferase I (396 aa).

Residues 2–79 (AVRIKLKPGR…REEEIDREFF (78 aa)) enclose the PUA domain.

Belongs to the methyltransferase superfamily. RlmI family.

Its subcellular location is the cytoplasm. The enzyme catalyses cytidine(1962) in 23S rRNA + S-adenosyl-L-methionine = 5-methylcytidine(1962) in 23S rRNA + S-adenosyl-L-homocysteine + H(+). Specifically methylates the cytosine at position 1962 (m5C1962) of 23S rRNA. This is Ribosomal RNA large subunit methyltransferase I from Shewanella sp. (strain MR-4).